Here is a 173-residue protein sequence, read N- to C-terminus: Shikimate kinase (173 aa).

10-15 (GSGKTT) contributes to the ATP binding site. Thr14 is a Mg(2+) binding site. Residues Asp32, Arg56, and Gly78 each coordinate substrate. Residue Arg117 coordinates ATP. Position 135 (Arg135) interacts with substrate.

The protein belongs to the shikimate kinase family. In terms of assembly, monomer. Mg(2+) serves as cofactor.

It is found in the cytoplasm. It catalyses the reaction shikimate + ATP = 3-phosphoshikimate + ADP + H(+). The protein operates within metabolic intermediate biosynthesis; chorismate biosynthesis; chorismate from D-erythrose 4-phosphate and phosphoenolpyruvate: step 5/7. In terms of biological role, catalyzes the specific phosphorylation of the 3-hydroxyl group of shikimic acid using ATP as a cosubstrate. In Limosilactobacillus fermentum (strain NBRC 3956 / LMG 18251) (Lactobacillus fermentum), this protein is Shikimate kinase.